Reading from the N-terminus, the 61-residue chain is Large ribosomal subunit protein uL30 (61 aa).

It belongs to the universal ribosomal protein uL30 family. Part of the 50S ribosomal subunit.

This chain is Large ribosomal subunit protein uL30, found in Corynebacterium jeikeium (strain K411).